The sequence spans 803 residues: Phenylalanine--tRNA ligase beta subunit (803 aa).

In terms of domain architecture, tRNA-binding spans S39–K151. A B5 domain is found at P406–I482. The Mg(2+) site is built by D466 and D470. Positions S707–R800 constitute an FDX-ACB domain.

It belongs to the phenylalanyl-tRNA synthetase beta subunit family. Type 1 subfamily. In terms of assembly, tetramer of two alpha and two beta subunits. The cofactor is Mg(2+).

Its subcellular location is the cytoplasm. It catalyses the reaction tRNA(Phe) + L-phenylalanine + ATP = L-phenylalanyl-tRNA(Phe) + AMP + diphosphate + H(+). This is Phenylalanine--tRNA ligase beta subunit from Wigglesworthia glossinidia brevipalpis.